We begin with the raw amino-acid sequence, 490 residues long: Glutamyl-tRNA(Gln) amidotransferase subunit A (490 aa).

Catalysis depends on charge relay system residues Lys-81 and Ser-156. Catalysis depends on Ser-180, which acts as the Acyl-ester intermediate.

The protein belongs to the amidase family. GatA subfamily. Heterotrimer of A, B and C subunits.

The enzyme catalyses L-glutamyl-tRNA(Gln) + L-glutamine + ATP + H2O = L-glutaminyl-tRNA(Gln) + L-glutamate + ADP + phosphate + H(+). Functionally, allows the formation of correctly charged Gln-tRNA(Gln) through the transamidation of misacylated Glu-tRNA(Gln) in organisms which lack glutaminyl-tRNA synthetase. The reaction takes place in the presence of glutamine and ATP through an activated gamma-phospho-Glu-tRNA(Gln). The sequence is that of Glutamyl-tRNA(Gln) amidotransferase subunit A from Nocardia farcinica (strain IFM 10152).